Reading from the N-terminus, the 294-residue chain is 4-hydroxy-tetrahydrodipicolinate synthase (294 aa).

T45 lines the pyruvate pocket. The active-site Proton donor/acceptor is the Y133. Residue K161 is the Schiff-base intermediate with substrate of the active site. A pyruvate-binding site is contributed by I203.

Belongs to the DapA family. In terms of assembly, homotetramer; dimer of dimers.

It localises to the cytoplasm. It carries out the reaction L-aspartate 4-semialdehyde + pyruvate = (2S,4S)-4-hydroxy-2,3,4,5-tetrahydrodipicolinate + H2O + H(+). The protein operates within amino-acid biosynthesis; L-lysine biosynthesis via DAP pathway; (S)-tetrahydrodipicolinate from L-aspartate: step 3/4. Catalyzes the condensation of (S)-aspartate-beta-semialdehyde [(S)-ASA] and pyruvate to 4-hydroxy-tetrahydrodipicolinate (HTPA). The chain is 4-hydroxy-tetrahydrodipicolinate synthase from Shewanella pealeana (strain ATCC 700345 / ANG-SQ1).